A 471-amino-acid polypeptide reads, in one-letter code: A-type ATP synthase subunit B (471 aa).

The protein belongs to the ATPase alpha/beta chains family. In terms of assembly, has multiple subunits with at least A(3), B(3), C, D, E, F, H, I and proteolipid K(x).

The protein resides in the cell membrane. Functionally, component of the A-type ATP synthase that produces ATP from ADP in the presence of a proton gradient across the membrane. The B chain is a regulatory subunit. This is A-type ATP synthase subunit B from Ignicoccus hospitalis (strain KIN4/I / DSM 18386 / JCM 14125).